Reading from the N-terminus, the 66-residue chain is Large ribosomal subunit protein bL35 (66 aa).

Belongs to the bacterial ribosomal protein bL35 family.

This Brucella anthropi (strain ATCC 49188 / DSM 6882 / CCUG 24695 / JCM 21032 / LMG 3331 / NBRC 15819 / NCTC 12168 / Alc 37) (Ochrobactrum anthropi) protein is Large ribosomal subunit protein bL35.